The sequence spans 173 residues: Photosystem I assembly protein Ycf3 (173 aa).

TPR repeat units follow at residues 35 to 68, 72 to 105, and 113 to 146; these read AFAY…EEDP, SYIL…NPRM, and AVIY…WKRA.

The protein belongs to the Ycf3 family.

Its subcellular location is the cellular thylakoid membrane. Its function is as follows. Essential for the assembly of the photosystem I (PSI) complex. May act as a chaperone-like factor to guide the assembly of the PSI subunits. The chain is Photosystem I assembly protein Ycf3 from Thermosynechococcus vestitus (strain NIES-2133 / IAM M-273 / BP-1).